Consider the following 625-residue polypeptide: Threonine--tRNA ligase (625 aa).

The editing domain stretch occupies residues 1 to 147 (MRMLLIHSDY…TIVPEEAKVE (147 aa)). Residues 206 to 505 (PHVRLMLEHE…MQEGKKPMFP (300 aa)) form a catalytic region. Zn(2+) contacts are provided by Cys-298, His-350, and His-474.

This sequence belongs to the class-II aminoacyl-tRNA synthetase family. In terms of assembly, homodimer. It depends on Zn(2+) as a cofactor.

The protein resides in the cytoplasm. It carries out the reaction tRNA(Thr) + L-threonine + ATP = L-threonyl-tRNA(Thr) + AMP + diphosphate + H(+). Catalyzes the attachment of threonine to tRNA(Thr) in a two-step reaction: L-threonine is first activated by ATP to form Thr-AMP and then transferred to the acceptor end of tRNA(Thr). Also edits incorrectly charged L-seryl-tRNA(Thr). The polypeptide is Threonine--tRNA ligase (Pyrococcus furiosus (strain ATCC 43587 / DSM 3638 / JCM 8422 / Vc1)).